Reading from the N-terminus, the 294-residue chain is 4-diphosphocytidyl-2-C-methyl-D-erythritol kinase (294 aa).

Lys-11 is an active-site residue. 96–106 (PVAAGIGGGSA) is an ATP binding site. The active site involves Asp-138.

Belongs to the GHMP kinase family. IspE subfamily.

The enzyme catalyses 4-CDP-2-C-methyl-D-erythritol + ATP = 4-CDP-2-C-methyl-D-erythritol 2-phosphate + ADP + H(+). It participates in isoprenoid biosynthesis; isopentenyl diphosphate biosynthesis via DXP pathway; isopentenyl diphosphate from 1-deoxy-D-xylulose 5-phosphate: step 3/6. Its function is as follows. Catalyzes the phosphorylation of the position 2 hydroxy group of 4-diphosphocytidyl-2C-methyl-D-erythritol. This Rhodopseudomonas palustris (strain BisB5) protein is 4-diphosphocytidyl-2-C-methyl-D-erythritol kinase.